Consider the following 542-residue polypeptide: Chaperonin GroEL (542 aa).

Residues 29–32 (TLGP), 86–90 (DGTTT), Gly-413, and Asp-494 each bind ATP.

The protein belongs to the chaperonin (HSP60) family. As to quaternary structure, forms a cylinder of 14 subunits composed of two heptameric rings stacked back-to-back. Interacts with the co-chaperonin GroES.

It localises to the cytoplasm. The catalysed reaction is ATP + H2O + a folded polypeptide = ADP + phosphate + an unfolded polypeptide.. Its function is as follows. Together with its co-chaperonin GroES, plays an essential role in assisting protein folding. The GroEL-GroES system forms a nano-cage that allows encapsulation of the non-native substrate proteins and provides a physical environment optimized to promote and accelerate protein folding. The chain is Chaperonin GroEL from Endomicrobium trichonymphae.